Consider the following 443-residue polypeptide: Proline--tRNA ligase (443 aa).

It belongs to the class-II aminoacyl-tRNA synthetase family. ProS type 2 subfamily. Homodimer.

The protein resides in the cytoplasm. The catalysed reaction is tRNA(Pro) + L-proline + ATP = L-prolyl-tRNA(Pro) + AMP + diphosphate. In terms of biological role, catalyzes the attachment of proline to tRNA(Pro) in a two-step reaction: proline is first activated by ATP to form Pro-AMP and then transferred to the acceptor end of tRNA(Pro). This chain is Proline--tRNA ligase, found in Caulobacter vibrioides (strain ATCC 19089 / CIP 103742 / CB 15) (Caulobacter crescentus).